We begin with the raw amino-acid sequence, 533 residues long: Tyrosine/DOPA decarboxylase 3 (533 aa).

K319 carries the post-translational modification N6-(pyridoxal phosphate)lysine.

It belongs to the group II decarboxylase family. In terms of assembly, homodimer. Requires pyridoxal 5'-phosphate as cofactor. In terms of tissue distribution, roots.

It catalyses the reaction L-tyrosine + H(+) = tyramine + CO2. The enzyme catalyses L-dopa + H(+) = dopamine + CO2. The catalysed reaction is 5-hydroxy-L-tryptophan + H(+) = serotonin + CO2. Marginally higher substrate specificity for L-DOPA over L-tyrosine. The protein is Tyrosine/DOPA decarboxylase 3 (TYDC3) of Papaver somniferum (Opium poppy).